We begin with the raw amino-acid sequence, 488 residues long: UDP-N-acetylmuramoyl-L-alanyl-D-glutamate--2,6-diaminopimelate ligase (488 aa).

Residues Leu-24, Ser-26, and 41–43 each bind UDP-N-acetyl-alpha-D-muramoyl-L-alanyl-D-glutamate; that span reads HQV. An ATP-binding site is contributed by 113 to 119; the sequence is GTNGKTT. UDP-N-acetyl-alpha-D-muramoyl-L-alanyl-D-glutamate is bound by residues Asn-154, 155–156, Ser-182, Gln-188, and Arg-190; that span reads TT. The residue at position 222 (Lys-222) is an N6-carboxylysine. Meso-2,6-diaminopimelate contacts are provided by residues Arg-386, 410-413, Gly-461, and Glu-465; that span reads DNPR. Positions 410-413 match the Meso-diaminopimelate recognition motif motif; sequence DNPR.

Belongs to the MurCDEF family. MurE subfamily. Mg(2+) is required as a cofactor. Post-translationally, carboxylation is probably crucial for Mg(2+) binding and, consequently, for the gamma-phosphate positioning of ATP.

It localises to the cytoplasm. The enzyme catalyses UDP-N-acetyl-alpha-D-muramoyl-L-alanyl-D-glutamate + meso-2,6-diaminopimelate + ATP = UDP-N-acetyl-alpha-D-muramoyl-L-alanyl-gamma-D-glutamyl-meso-2,6-diaminopimelate + ADP + phosphate + H(+). The protein operates within cell wall biogenesis; peptidoglycan biosynthesis. Its function is as follows. Catalyzes the addition of meso-diaminopimelic acid to the nucleotide precursor UDP-N-acetylmuramoyl-L-alanyl-D-glutamate (UMAG) in the biosynthesis of bacterial cell-wall peptidoglycan. The sequence is that of UDP-N-acetylmuramoyl-L-alanyl-D-glutamate--2,6-diaminopimelate ligase from Haemophilus influenzae (strain PittGG).